The sequence spans 1220 residues: Plasma membrane calcium-transporting ATPase 1 (1220 aa).

N-acetylglycine is present on glycine 2. Topologically, residues 2–105 (GDMANNSVAY…KTFLQLVWEA (104 aa)) are cytoplasmic. Phosphoserine occurs at positions 8 and 17. A helical transmembrane segment spans residues 106–126 (LQDVTLIILEIAAIVSLGLSF). Over 127–154 (YQPPEGDNALCGEVSVGEEEGEGETGWI) the chain is Extracellular. The helical transmembrane segment at 155–175 (EGAAILLSVVCVVLVTAFNDW) threads the bilayer. The Cytoplasmic portion of the chain corresponds to 176 to 366 (SKEKQFRGLQ…KEKSVLQGKL (191 aa)). Positions 297–356 (EEEKKDEKKKEKKNKKQDGAIENRNKAKAQDGAAMEMQPLKSEEGGDGDEKDKKKANLPK) are disordered. 2 stretches are compositionally biased toward basic and acidic residues: residues 312 to 325 (KQDGAIENRNKAKA) and 337 to 356 (KSEEGGDGDEKDKKKANLPK). Serine 338 carries the phosphoserine modification. The chain crosses the membrane as a helical span at residues 367 to 386 (TKLAVQIGKAGLLMSAITVI). Residues 387-418 (ILVLYFVIDTFWVQKRPWLAECTPIYIQYFVK) lie on the Extracellular side of the membrane. A helical transmembrane segment spans residues 419–439 (FFIIGVTVLVVAVPEGLPLAV). At 440–855 (TISLAYSVKK…RNVYDSISKF (416 aa)) the chain is on the cytoplasmic side. The active-site 4-aspartylphosphate intermediate is aspartate 475. Positions 475, 477, and 797 each coordinate Mg(2+). Residues 856-876 (LQFQLTVNVVAVIVAFTGACI) traverse the membrane as a helical segment. Topologically, residues 877 to 882 (TQDSPL) are extracellular. A helical membrane pass occupies residues 883–903 (KAVQMLWVNLIMDTLASLALA). Residues 904–927 (TEPPTESLLLRKPYGRNKPLISRT) lie on the Cytoplasmic side of the membrane. The chain crosses the membrane as a helical span at residues 928 to 948 (MMKNILGHAFYQLVVVFTLLF). At 949–971 (AGEKFFDIDSGRNAPLHAPPSEH) the chain is on the extracellular side. Residues 972-991 (YTIVFNTFVLMQLFNEINAR) traverse the membrane as a helical segment. At 992 to 1005 (KIHGERNVFEGIFN) the chain is on the cytoplasmic side. A helical membrane pass occupies residues 1006–1027 (NAIFCTIVLGTFVVQIIIVQFG). The Extracellular portion of the chain corresponds to 1028–1039 (GKPFSCSELSIE). Residues 1040–1060 (QWLWSIFLGMGTLLWGQLIST) form a helical membrane-spanning segment. The Cytoplasmic portion of the chain corresponds to 1061–1220 (IPTSRLKFLK…SPLHSLETSL (160 aa)). The calmodulin-binding subdomain A stretch occupies residues 1100 to 1117 (LRRGQILWFRGLNRIQTQ). Phosphothreonine; by PKC is present on threonine 1116. The tract at residues 1118-1220 (IRVVNAFRSS…SPLHSLETSL (103 aa)) is required for basolateral membrane targeting. A phosphoserine mark is found at serine 1140 and serine 1155. Residues 1162 to 1220 (IDDTDAEDDAPTKRNSSPPPSPNKNNNAVDSGIHLTIEMNKSATSSSPGSPLHSLETSL) form a disordered region. Residue threonine 1165 is modified to Phosphothreonine. Serine 1177 bears the Phosphoserine; by PKA mark. Phosphoserine occurs at positions 1178 and 1182. Polar residues predominate over residues 1200–1220 (MNKSATSSSPGSPLHSLETSL).

It belongs to the cation transport ATPase (P-type) (TC 3.A.3) family. Type IIB subfamily. As to quaternary structure, monomer. Dimer. Oligomer. Calmodulin binding. Interacts with PDZD11. Interacts with SLC35G1 and STIM1. Interacts with YWHAE; interacts with the monomeric and dimeric forms of the YWHAE but prefer the monomer form; this interaction inhibits calcium-transporting ATPase activity. Interacts with NPTN; this interaction stabilizes ATP2B1 and increases ATPase activity; this interaction controls T cell calcium homeostasis following T cell activation. Interacts with EPB41; regulates small intestinal calcium absorption through regulation of membrane expression of ATP2B1. As to expression, isoform B is ubiquitously expressed. Isoforms A and E have only been found in brain cortex. Isoform C is found in brain cortex, skeletal muscle and heart muscle. Isoform D has only been found in fetal skeletal muscle. Isoform K has been found in small intestine and liver. Isoform B is expressed in hair cells of inner ear.

The protein localises to the cell membrane. The protein resides in the basolateral cell membrane. It localises to the synapse. Its subcellular location is the presynaptic cell membrane. It is found in the cytoplasmic vesicle. The protein localises to the secretory vesicle. The protein resides in the synaptic vesicle membrane. The enzyme catalyses Ca(2+)(in) + ATP + H2O = Ca(2+)(out) + ADP + phosphate + H(+). Functionally, catalyzes the hydrolysis of ATP coupled with the transport of calcium from the cytoplasm to the extracellular space thereby maintaining intracellular calcium homeostasis. Plays a role in blood pressure regulation through regulation of intracellular calcium concentration and nitric oxide production leading to regulation of vascular smooth muscle cells vasoconstriction. Positively regulates bone mineralization through absorption of calcium from the intestine. Plays dual roles in osteoclast differentiation and survival by regulating RANKL-induced calcium oscillations in preosteoclasts and mediating calcium extrusion in mature osteoclasts. Regulates insulin sensitivity through calcium/calmodulin signaling pathway by regulating AKT1 activation and NOS3 activation in endothelial cells. May play a role in synaptic transmission by modulating calcium and proton dynamics at the synaptic vesicles. The polypeptide is Plasma membrane calcium-transporting ATPase 1 (Rattus norvegicus (Rat)).